Here is a 147-residue protein sequence, read N- to C-terminus: Ribosome-binding factor A (147 aa).

The interval 127 to 147 is disordered; it reads AAEARHAGEPDPYKTDRDDAE.

The protein belongs to the RbfA family. In terms of assembly, monomer. Binds 30S ribosomal subunits, but not 50S ribosomal subunits or 70S ribosomes.

The protein localises to the cytoplasm. Functionally, one of several proteins that assist in the late maturation steps of the functional core of the 30S ribosomal subunit. Associates with free 30S ribosomal subunits (but not with 30S subunits that are part of 70S ribosomes or polysomes). Required for efficient processing of 16S rRNA. May interact with the 5'-terminal helix region of 16S rRNA. This Nocardia farcinica (strain IFM 10152) protein is Ribosome-binding factor A.